Reading from the N-terminus, the 1117-residue chain is MFDLDKNTNIESNHVKIGNKNTTRRLIIKSSKNSVRIAYAPPEKHFVDVTDRFLLPETETQNLKTRLGIFELEPLPPNGLVCCVLPNGELIQPNDFVLVNSPFPGEPFQIARIISFEKSRPCVSTNLYDSVRLNWYFRPRDIQRHLTDTRLLFASMHSDIYNIGSVQEKCTVKHRSQIENLDEYKSQAKSYYFDRLFDQNINKVFDVVPVTQVKNAPDDVLEDLFKNYDFIVTEYGKGRALLNEPSNCKVCKKWCAFDFSVQCADCKKYYHMDCVVPPLLKKPPHGFGWTCATCSFATQRKKSTFQKENANVDANHATENNLEGQATQKSVSILKGHNKALSNVSLQEDHGKRRNLKSLRSSRNLHQQSRKSLDENKPNSFSNVSKLKRLPWNMRYLDLKSDLTVEKKSDIYPSRARISISPMLPTSSEDNLHPLQPLTTADEEMDLDLKSDERFKVDIPTFFERWPFLKDLPLKGYLFPLCEPNLQSAMLLVPITYSDALLDDYLCSCWNLWKKLRLPVSAFVFLELTITALYETKLSPAAAFEKLKSWMPGFGDPKNCTGKRVDEHKINSLVKEFGVSLQCFVEKLKFEYSLKEIFFSFLSWASSPKGLNTFKKLSDSSLSTTTTDSHGLPTCCYDIGMYDLQKILKLKKTPICRWCHSKRSSEWFVAPPIEESSPKDKSKIVALCQRCGYVWRYYGYPLQQATPSDLRNCDFEPVKKRKADWDHLSNHDNEVKKENNRIRNASSLMENPRVSTKTFDNFTLTHDSTINVKADTVKRARQNNIKNKDDVNFSEDRKKCCALCGIVGTEGLLVCFKCGTCVHERCYVCDDYAENEQMLVSASHLSGRTTRNSASPGIVSGKKSYAKKDQVLSWACLSCRSNDNLGQNNDNHCVLCLQSASHSLMKKTVEGNWVHLICASWTPDVYVPAEESEPVCGIAQLPPNRWEKKCEVCGNSFGVCVSSPNSGLTSHVTCAEKANWYLGFEFVKQDQSPFSMLSNLKSLSFFGNVTEINTNKCMINSWTSLRPVLFGPSEQLPRNFLLRNDIVPNTNNSAWSEYIRNLYPKAYIYLLQYTIAVCKPTIAPTNVACCCSKCNSTMSPFWWPGNICQACHCLRVE.

One can recognise a BAH domain in the interval 89-208; that stretch reads ELIQPNDFVL…QNINKVFDVV (120 aa). The segment at 227–282 adopts a Phorbol-ester/DAG-type zinc-finger fold; the sequence is NYDFIVTEYGKGRALLNEPSNCKVCKKWCAFDFSVQCADCKKYYHMDCVVPPLLKK. A PHD-type 1 zinc finger spans residues 245–297; it reads PSNCKVCKKWCAFDFSVQCADCKKYYHMDCVVPPLLKKPPHGFGWTCATCSFA. Positions 361–380 are disordered; that stretch reads SSRNLHQQSRKSLDENKPNS. The segment at 798–882 adopts a PHD-type 2 zinc-finger fold; it reads KKCCALCGIV…SWACLSCRSN (85 aa). The C2HC pre-PHD-type zinc finger occupies 890-925; sequence DNHCVLCLQSASHSLMKKTVEGNWVHLICASWTPDV. The PHD-type 3; degenerate zinc-finger motif lies at 948–1002; it reads KKCEVCGNSFGVCVSSPNSGLTSHVTCAEKANWYLGFEFVKQDQSPFSMLSNLKS.

As to quaternary structure, component of the Lid2 complex composed of ash2, jmj3, lid2, sdc1 and snt2.

It is found in the nucleus. This is Lid2 complex component snt2 (snt2) from Schizosaccharomyces pombe (strain 972 / ATCC 24843) (Fission yeast).